A 233-amino-acid polypeptide reads, in one-letter code: Outer membrane protein MIP (233 aa).

The signal sequence occupies residues 1-20 (MKMKLVTAAIMGLAMSTAMA). Residues 144–233 (SDTVTVEYTG…IHLISVKKAA (90 aa)) form the PPIase FKBP-type domain.

Belongs to the FKBP-type PPIase family.

It is found in the cell outer membrane. The enzyme catalyses [protein]-peptidylproline (omega=180) = [protein]-peptidylproline (omega=0). With respect to regulation, strongly inhibited by FK506 but is completely resistant to cyclosporin A. In terms of biological role, essential virulence factor associated with macrophage infectivity. Exhibits PPIase activity. This is Outer membrane protein MIP (mip) from Legionella longbeachae.